A 200-amino-acid polypeptide reads, in one-letter code: Eukaryotic translation initiation factor isoform 4E (200 aa).

Residues 1–22 form a disordered region; the sequence is MATEAPIEATEVPPASATETVA. Residues 44-49, Lys-76, and 94-95 contribute to the mRNA site; these read QGAAWG and WE. A disulfide bridge links Cys-99 with Cys-138. Residues 145-150 and 189-192 each bind mRNA; these read RRSQDK and KRER.

Belongs to the eukaryotic initiation factor 4E family. EIF4F is a multi-subunit complex, the composition of which varies with external and internal environmental conditions. It is composed of at least EIF4A, EIF4E and EIF4G. EIF4E is also known to interact with other partners. In higher plants two isoforms of EIF4F have been identified, named isoform EIF4F and isoform EIF(iso)4F. Isoform EIF4F has subunits p220 and p26, whereas isoform EIF(iso)4F has subunits p82 and p28. As to quaternary structure, (Microbial infection) Interacts with viral genome-linked protein (VPg); this interaction is possible in susceptible hosts but impaired in resistant plants. In terms of processing, according to the redox status, the Cys-99-Cys-138 disulfide bridge may have a role in regulating protein function by affecting its ability to bind capped mRNA. In terms of tissue distribution, expressed ubiquitously in seedlings, roots, leaves, sepals, petals, anthers and dehisced pollen, with highest levels in pollen, maturing anthers and roots. Strongly expressed in susceptible plants but not in resistant ones.

It localises to the cytoplasm. It is found in the nucleus. Component of the protein complex eIF4F, which is involved in the recognition of the mRNA cap, ATP-dependent unwinding of 5'-terminal secondary structure and recruitment of mRNA to the ribosome. Recognizes and binds the 7-methylguanosine-containing mRNA cap during an early step in the initiation of protein synthesis and facilitates ribosome binding by inducing the unwinding of the mRNAs secondary structures. Key component of recessive resistance to potyviruses. Its function is as follows. (Microbial infection) Susceptibility host factor required for viral infection (e.g. potato virus Y (PVY) and pepper mottle virus (PepMoV)) by recruiting viral RNAs to the host ribosomal complex via an interaction with viral genome-linked protein (VPg). In Nicotiana tabacum (Common tobacco), this protein is Eukaryotic translation initiation factor isoform 4E.